A 545-amino-acid polypeptide reads, in one-letter code: Zinc finger protein with KRAB and SCAN domains 4 (545 aa).

Positions 1–22 (MAREPRKNAALDAQSAEDQTGL) are disordered. Residues Lys-26 and Lys-29 each participate in a glycyl lysine isopeptide (Lys-Gly) (interchain with G-Cter in SUMO2) cross-link. A disordered region spans residues 34–55 (ALTAEVRAPCSPARGPERSRQR). The 83-residue stretch at 53-135 (RQRFRGFRYP…VLLEYLERQL (83 aa)) folds into the SCAN box domain. Glycyl lysine isopeptide (Lys-Gly) (interchain with G-Cter in SUMO2) cross-links involve residues Lys-178 and Lys-222. The KRAB domain maps to 221–317 (LKMEDVALTL…QRKQKNAIGS (97 aa)). 5 consecutive C2H2-type zinc fingers follow at residues 320 to 342 (HYCH…RRIH), 348 to 370 (YECE…QRVH), 376 to 398 (YECE…QRTH), 404 to 426 (YECD…HKIH), and 432 to 454 (YQCN…QRIH). Residues 455-467 (GDKNVQNPEHGES) show a composition bias toward basic and acidic residues. Residues 455 to 480 (GDKNVQNPEHGESWESQGRTESQWEN) form a disordered region. The segment covering 468-480 (WESQGRTESQWEN) has biased composition (polar residues). 2 C2H2-type zinc fingers span residues 487 to 509 (YKCN…QKIH) and 515 to 537 (YQCD…QRSH).

This sequence belongs to the krueppel C2H2-type zinc-finger protein family. In terms of tissue distribution, expressed in adult heart, brain, placenta, lung and kidney, but not in adult liver and skeletal muscle. In 17-day old embryo, detected in liver, skeletal muscle, brain, heart and small intestine.

It is found in the nucleus. In terms of biological role, may be involved in the transcriptional activation of MDM2 and EP300 genes. The polypeptide is Zinc finger protein with KRAB and SCAN domains 4 (ZKSCAN4) (Homo sapiens (Human)).